The primary structure comprises 260 residues: Late transcription factor 1 (260 aa).

The protein belongs to the chordopoxvirinae VLTF-1 family. In terms of assembly, interacts with the late transcription factors VLTF-2 and VLTF-3. Interacts with the late transcription elongation factor VLTF-4. Interacts with itself.

In terms of biological role, associates with RNA polymerase to initiate transcription from late gene promoters. The sequence is that of Late transcription factor 1 (OPG093) from Homo sapiens (Human).